Consider the following 92-residue polypeptide: C-C motif chemokine 3 (92 aa).

An N-terminal signal peptide occupies residues 1–23; that stretch reads MKVSTTALAVLLCTMTLCNQVFS. 2 disulfides stabilise this stretch: Cys34–Cys57 and Cys35–Cys73.

It belongs to the intercrine beta (chemokine CC) family. In terms of assembly, self-associates. Also heterodimer of MIP-1-alpha(4-69) and MIP-1-beta(3-69). Interacts with CCR1. In terms of tissue distribution, expressed in lung, spleen, and pancreas.

Its subcellular location is the secreted. In terms of biological role, monokine with inflammatory and chemokinetic properties. Binds to CCR1, CCR4 and CCR5. One of the major HIV-suppressive factors produced by CD8+ T-cells. Recombinant MIP-1-alpha induces a dose-dependent inhibition of different strains of HIV-1, HIV-2, and simian immunodeficiency virus (SIV). The polypeptide is C-C motif chemokine 3 (Ccl3) (Mus musculus (Mouse)).